The sequence spans 312 residues: Large ribosomal subunit protein uL10 (312 aa).

The tract at residues 287 to 312 (AAAAPAAKKEEPKEESDDDMGFGLFD) is disordered.

The protein belongs to the universal ribosomal protein uL10 family. P0 forms a pentameric complex by interaction with dimers of P1 and P2. In terms of processing, phosphorylated.

Ribosomal protein P0 is the functional equivalent of E.coli protein L10. The protein is Large ribosomal subunit protein uL10 of Caenorhabditis elegans.